We begin with the raw amino-acid sequence, 476 residues long: Zinc metalloproteinase/disintegrin (476 aa).

Positions 1-20 (MIQVLLVIICLADFPYQGTS) are cleaved as a signal peptide. The propeptide occupies 21-184 (IILESGNVND…KSDEPIKASQ (164 aa)). At Gln-185 the chain carries Pyrrolidone carboxylic acid. The Peptidase M12B domain occupies 191-387 (RYIELVVVAD…RNPQCILNEP (197 aa)). The Ca(2+) site is built by Glu-194 and Asp-278. Disulfide bonds link Cys-302-Cys-382, Cys-342-Cys-366, and Cys-344-Cys-349. His-327 is a Zn(2+) binding site. Glu-328 is a catalytic residue. 2 residues coordinate Zn(2+): His-331 and His-337. The Ca(2+) site is built by Cys-382 and Asn-385. The propeptide occupies 388–403 (LRTDTVSTPVSGNELL). The Disintegrin domain occupies 395 to 476 (TPVSGNELLE…AGCPRNGFYG (82 aa)). Cystine bridges form between Cys-409-Cys-424, Cys-411-Cys-419, Cys-418-Cys-441, Cys-432-Cys-438, Cys-437-Cys-462, and Cys-450-Cys-469. Positions 454 to 456 (KGD) match the Cell attachment site motif.

Belongs to the venom metalloproteinase (M12B) family. P-II subfamily. P-IId sub-subfamily. Homodimer; disulfide-linked (disintegrin). Requires Zn(2+) as cofactor. In terms of tissue distribution, expressed by the venom gland.

Its subcellular location is the secreted. The metalloproteinase is inhibited by EDTA, o-phenanthroline, and cysteine. Glutathione does not inhibit the enzymatic activity. Its function is as follows. Shows weak degradation of alpha-fibrinogen, but has no activity on beta- and gamma-chains. Digests luteinizing hormone-releasing hormone (LH-RH) and oxidized insulin at X-Leu, X-Phe, and X-Val bonds as well as X-His bond. Does not show fibrinogen-clotting activity. Does not show hemorrhagic activity. In terms of biological role, inhibits ADP-induced platelet aggregation. This chain is Zinc metalloproteinase/disintegrin, found in Gloydius brevicauda (Korean slamosa snake).